We begin with the raw amino-acid sequence, 513 residues long: Probable DNA ligase (513 aa).

Glutamate 213 is a binding site for ATP. Lysine 215 functions as the N6-AMP-lysine intermediate in the catalytic mechanism. ATP is bound by residues arginine 220, arginine 235, glutamate 264, phenylalanine 304, arginine 376, and lysine 382.

This sequence belongs to the ATP-dependent DNA ligase family. Mg(2+) serves as cofactor.

It carries out the reaction ATP + (deoxyribonucleotide)n-3'-hydroxyl + 5'-phospho-(deoxyribonucleotide)m = (deoxyribonucleotide)n+m + AMP + diphosphate.. In terms of biological role, DNA ligase that seals nicks in double-stranded DNA during DNA replication, DNA recombination and DNA repair. This Anaeromyxobacter dehalogenans (strain 2CP-1 / ATCC BAA-258) protein is Probable DNA ligase.